A 108-amino-acid polypeptide reads, in one-letter code: ATP-dependent Clp protease adapter protein ClpS (108 aa).

Belongs to the ClpS family. In terms of assembly, binds to the N-terminal domain of the chaperone ClpA.

Its function is as follows. Involved in the modulation of the specificity of the ClpAP-mediated ATP-dependent protein degradation. In Ralstonia pickettii (strain 12J), this protein is ATP-dependent Clp protease adapter protein ClpS.